A 237-amino-acid chain; its full sequence is Large ribosomal subunit protein uL2 (237 aa).

Residues 202–237 are disordered; sequence FGGGNRKHPGKPTTVSRNAPPGRKVGHIAARRTGKR. A compositionally biased stretch (basic residues) spans 225-237; sequence KVGHIAARRTGKR.

The protein belongs to the universal ribosomal protein uL2 family. Part of the 50S ribosomal subunit. Forms a bridge to the 30S subunit in the 70S ribosome.

Its function is as follows. One of the primary rRNA binding proteins. Required for association of the 30S and 50S subunits to form the 70S ribosome, for tRNA binding and peptide bond formation. It has been suggested to have peptidyltransferase activity; this is somewhat controversial. Makes several contacts with the 16S rRNA in the 70S ribosome. This Methanococcoides burtonii (strain DSM 6242 / NBRC 107633 / OCM 468 / ACE-M) protein is Large ribosomal subunit protein uL2.